We begin with the raw amino-acid sequence, 188 residues long: UPF0200 protein M1627_1244 (188 aa).

15–22 (GMPGSGKS) is a binding site for ATP.

It belongs to the UPF0200 family.

This Saccharolobus islandicus (strain M.16.27) (Sulfolobus islandicus) protein is UPF0200 protein M1627_1244.